The chain runs to 703 residues: Centrosomal protein of 63 kDa (703 aa).

N-acetylmethionine is present on Met1. 4 coiled-coil regions span residues 22–199 (EAEL…ESVE), 242–306 (MTVL…QHAV), 353–533 (LEGS…STQM), and 676–703 (HILE…TALK). At Ser278 the chain carries Phosphoserine.

The protein belongs to the CEP63 family. In terms of assembly, interacts with CEP152 and CDK1; these interactions recruit both ligands to centrosomes. Interacts with CDK2, CDK5RAP2, WDR62, CEP90, KIAA0753/moonraker and CCDC14. CEP63, CDK5RAP2, CEP152, WDR62 are proposed to form a stepwise assembled complex at the centrosome forming a ring near parental centrioles. Interacts with CCDC57; the interaction is required for their location to proximal end of centrioles. Interacts with FXR1; promoting its stabilization. (Microbial infection) Interacts with zika virus serine protease NS3; this interaction disorganizes the centrosome. In terms of processing, polyubiquitinated via 'Lys-48'-linked ubiquitin, leading to its degradation. Deubiquitinated by USP36, promoting its stabilization.

The protein localises to the cytoplasm. It is found in the cytoskeleton. Its subcellular location is the microtubule organizing center. The protein resides in the centrosome. It localises to the centriole. The protein localises to the centriolar satellite. Required for normal spindle assembly. Plays a key role in mother-centriole-dependent centriole duplication; the function seems also to involve CEP152, CDK5RAP2 and WDR62 through a stepwise assembled complex at the centrosome that recruits CDK2 required for centriole duplication. Reported to be required for centrosomal recruitment of CEP152; however, this function has been questioned. Also recruits CDK1 to centrosomes. Plays a role in DNA damage response. Following DNA damage, such as double-strand breaks (DSBs), is removed from centrosomes; this leads to the inactivation of spindle assembly and delay in mitotic progression. Promotes stabilization of FXR1 protein by inhibiting FXR1 ubiquitination. The protein is Centrosomal protein of 63 kDa of Homo sapiens (Human).